Here is a 149-residue protein sequence, read N- to C-terminus: Large ribosomal subunit protein bL9 (149 aa).

This sequence belongs to the bacterial ribosomal protein bL9 family.

Its function is as follows. Binds to the 23S rRNA. The polypeptide is Large ribosomal subunit protein bL9 (Christiangramia forsetii (strain DSM 17595 / CGMCC 1.15422 / KT0803) (Gramella forsetii)).